The chain runs to 419 residues: MSKLNPYFGEYGGMYVPQILMPALKQLETAFIEAQEDEAFQEEFTDLLKNYAGRPTALTLTRNLSPNPLAKIYLKREDLLHGGAHKTNQVLGQALLAKRMGKKEIIAETGAGQHGVATALACALLGLKCRVYMGAKDVERQSPNVFRMKLMGAEVIPVTSGSATLKDACNEAMRDWSGCYDKAHYLLGTAAGPHPYPTIVREFQRMIGAETKRQILEREGRLPDAVIACVGGGSNAIGMFADFIDEPEVALIGVEPAGKGIDTPMHGAPLHHGKTGIFFGMKAPLMQDSEGQVEESYSVSAGLDFPSVGPQHAHLAAIGRATYESATDDEALETFQLLARCEGIIPALESAHAIAYAVKLAKEATKETLLVVNLSGRGDKDIFTVADILEQQKVEQQKVEQQKADNQNTEKNNQESGNE.

An N6-(pyridoxal phosphate)lysine modification is found at K86. Positions 394–403 are enriched in basic and acidic residues; sequence VEQQKVEQQK. The disordered stretch occupies residues 394 to 419; the sequence is VEQQKVEQQKADNQNTEKNNQESGNE. Over residues 404-419 the composition is skewed to polar residues; that stretch reads ADNQNTEKNNQESGNE.

It belongs to the TrpB family. In terms of assembly, tetramer of two alpha and two beta chains. Requires pyridoxal 5'-phosphate as cofactor.

The catalysed reaction is (1S,2R)-1-C-(indol-3-yl)glycerol 3-phosphate + L-serine = D-glyceraldehyde 3-phosphate + L-tryptophan + H2O. Its pathway is amino-acid biosynthesis; L-tryptophan biosynthesis; L-tryptophan from chorismate: step 5/5. Its function is as follows. The beta subunit is responsible for the synthesis of L-tryptophan from indole and L-serine. The chain is Tryptophan synthase beta chain from Shewanella halifaxensis (strain HAW-EB4).